The following is a 209-amino-acid chain: Uracil phosphoribosyltransferase (209 aa).

5-phospho-alpha-D-ribose 1-diphosphate-binding positions include R79, R104, and 131-139; that span reads DPMLATGGS. Uracil-binding positions include I194 and 199–201; that span reads GDA. Residue D200 participates in 5-phospho-alpha-D-ribose 1-diphosphate binding.

It belongs to the UPRTase family. Mg(2+) is required as a cofactor.

It carries out the reaction UMP + diphosphate = 5-phospho-alpha-D-ribose 1-diphosphate + uracil. It participates in pyrimidine metabolism; UMP biosynthesis via salvage pathway; UMP from uracil: step 1/1. With respect to regulation, allosterically activated by GTP. Functionally, catalyzes the conversion of uracil and 5-phospho-alpha-D-ribose 1-diphosphate (PRPP) to UMP and diphosphate. This is Uracil phosphoribosyltransferase from Streptococcus uberis (strain ATCC BAA-854 / 0140J).